Consider the following 93-residue polypeptide: UPF0390 protein C24B10.18 (93 aa).

Residues 1–32 (MAQGEFKKKKNSSANKGGRVTKHSKNPKKGAR) are disordered. Positions 19–31 (RVTKHSKNPKKGA) are enriched in basic residues.

It belongs to the UPF0390 family.

The chain is UPF0390 protein C24B10.18 from Schizosaccharomyces pombe (strain 972 / ATCC 24843) (Fission yeast).